The following is a 387-amino-acid chain: 3-ketoacyl-CoA thiolase (387 aa).

Cysteine 91 functions as the Acyl-thioester intermediate in the catalytic mechanism. Catalysis depends on proton acceptor residues histidine 343 and cysteine 373.

It belongs to the thiolase-like superfamily. Thiolase family. Heterotetramer of two alpha chains (FadB) and two beta chains (FadA).

Its subcellular location is the cytoplasm. It catalyses the reaction an acyl-CoA + acetyl-CoA = a 3-oxoacyl-CoA + CoA. Its pathway is lipid metabolism; fatty acid beta-oxidation. In terms of biological role, catalyzes the final step of fatty acid oxidation in which acetyl-CoA is released and the CoA ester of a fatty acid two carbons shorter is formed. The sequence is that of 3-ketoacyl-CoA thiolase from Escherichia fergusonii (strain ATCC 35469 / DSM 13698 / CCUG 18766 / IAM 14443 / JCM 21226 / LMG 7866 / NBRC 102419 / NCTC 12128 / CDC 0568-73).